Reading from the N-terminus, the 251-residue chain is Hydroxyacylglutathione hydrolase (251 aa).

Zn(2+) contacts are provided by H53, H55, D57, H58, H110, D127, and H165.

The protein belongs to the metallo-beta-lactamase superfamily. Glyoxalase II family. As to quaternary structure, monomer. Zn(2+) serves as cofactor.

It catalyses the reaction an S-(2-hydroxyacyl)glutathione + H2O = a 2-hydroxy carboxylate + glutathione + H(+). It functions in the pathway secondary metabolite metabolism; methylglyoxal degradation; (R)-lactate from methylglyoxal: step 2/2. In terms of biological role, thiolesterase that catalyzes the hydrolysis of S-D-lactoyl-glutathione to form glutathione and D-lactic acid. The chain is Hydroxyacylglutathione hydrolase from Salmonella typhi.